The chain runs to 234 residues: MRLVQLSRHSIAFPSPEGALREPNGLLALGGDLSPARLLMAYQHGIFPWFSPGDPILWWSPDPRAVLWPEKFHLSRSMKRFHNASPYRVTLNYAFDRVIDGCANHRDEGTWITRGIEEAYRRLHELGHAHSIEVWRDRELVGGMYGVSQGALFCGESMFSRQENASKTALLVFCAEFIRHGGKLIDCQVLNSHTASLGAIEIPRRDYLDHLAALRQQPLASRFWVPRTLFLPRK.

Belongs to the L/F-transferase family.

It is found in the cytoplasm. The enzyme catalyses N-terminal L-lysyl-[protein] + L-leucyl-tRNA(Leu) = N-terminal L-leucyl-L-lysyl-[protein] + tRNA(Leu) + H(+). It carries out the reaction N-terminal L-arginyl-[protein] + L-leucyl-tRNA(Leu) = N-terminal L-leucyl-L-arginyl-[protein] + tRNA(Leu) + H(+). The catalysed reaction is L-phenylalanyl-tRNA(Phe) + an N-terminal L-alpha-aminoacyl-[protein] = an N-terminal L-phenylalanyl-L-alpha-aminoacyl-[protein] + tRNA(Phe). Functionally, functions in the N-end rule pathway of protein degradation where it conjugates Leu, Phe and, less efficiently, Met from aminoacyl-tRNAs to the N-termini of proteins containing an N-terminal arginine or lysine. The protein is Leucyl/phenylalanyl-tRNA--protein transferase of Salmonella gallinarum (strain 287/91 / NCTC 13346).